The chain runs to 583 residues: Aspartate--tRNA ligase (583 aa).

Glutamate 174 contributes to the L-aspartate binding site. The interval glutamine 198–lysine 201 is aspartate. Arginine 220 provides a ligand contact to L-aspartate. Residues arginine 220–glutamate 222 and glutamine 229 contribute to the ATP site. Position 445 (histidine 445) interacts with L-aspartate. Glutamate 479 provides a ligand contact to ATP. Arginine 486 is an L-aspartate binding site. An ATP-binding site is contributed by glycine 531 to arginine 534.

The protein belongs to the class-II aminoacyl-tRNA synthetase family. Type 1 subfamily. As to quaternary structure, homodimer.

The protein resides in the cytoplasm. It carries out the reaction tRNA(Asp) + L-aspartate + ATP = L-aspartyl-tRNA(Asp) + AMP + diphosphate. In terms of biological role, catalyzes the attachment of L-aspartate to tRNA(Asp) in a two-step reaction: L-aspartate is first activated by ATP to form Asp-AMP and then transferred to the acceptor end of tRNA(Asp). This Flavobacterium psychrophilum (strain ATCC 49511 / DSM 21280 / CIP 103535 / JIP02/86) protein is Aspartate--tRNA ligase.